The chain runs to 511 residues: Histidine ammonia-lyase (511 aa).

A cross-link (5-imidazolinone (Ala-Gly)) is located at residues 142-144 (ASG). Ser-143 carries the post-translational modification 2,3-didehydroalanine (Ser).

This sequence belongs to the PAL/histidase family. Post-translationally, contains an active site 4-methylidene-imidazol-5-one (MIO), which is formed autocatalytically by cyclization and dehydration of residues Ala-Ser-Gly.

The protein resides in the cytoplasm. It carries out the reaction L-histidine = trans-urocanate + NH4(+). Its pathway is amino-acid degradation; L-histidine degradation into L-glutamate; N-formimidoyl-L-glutamate from L-histidine: step 1/3. This Phenylobacterium zucineum (strain HLK1) protein is Histidine ammonia-lyase.